The sequence spans 80 residues: Clavanin-C (80 aa).

An N-terminal signal peptide occupies residues 1 to 19 (MKTTILILLILGLGINAKS). Residues 20–29 (LEERKSEEEK) constitute a propeptide that is removed on maturation. Position 52 is a phenylalanine amide (Phe-52). A propeptide spanning residues 54–80 (DDQQDNGKFYGHYAEDNGKHWYDTGDQ) is cleaved from the precursor.

In terms of tissue distribution, hemocytes and pharyngeal tissues.

It is found in the secreted. Its function is as follows. Has antimicrobial activity against E.coli, L.monocytogenes and C.albicans. This is Clavanin-C from Styela clava (Sea squirt).